The following is a 329-amino-acid chain: Malate dehydrogenase 2 (329 aa).

12 to 18 contacts NAD(+); it reads GAAGQIA. Arg-93 and Arg-99 together coordinate substrate. Residues Asn-106, Gln-113, and 130–132 contribute to the NAD(+) site; that span reads VGN. Asn-132 and Arg-163 together coordinate substrate. Catalysis depends on His-188, which acts as the Proton acceptor.

This sequence belongs to the LDH/MDH superfamily. MDH type 2 family.

It catalyses the reaction (S)-malate + NAD(+) = oxaloacetate + NADH + H(+). Its function is as follows. Catalyzes the reversible oxidation of malate to oxaloacetate. This is Malate dehydrogenase 2 from Burkholderia thailandensis (strain ATCC 700388 / DSM 13276 / CCUG 48851 / CIP 106301 / E264).